Here is a 431-residue protein sequence, read N- to C-terminus: L-lysine N6-monooxygenase MbtG (431 aa).

A signal peptide spans 1–21 (MNPTLAVLGAGAKAVAVAAKA).

It belongs to the lysine N(6)-hydroxylase/L-ornithine N(5)-oxygenase family. FAD is required as a cofactor.

The catalysed reaction is L-lysine + NADPH + O2 = N(6)-hydroxy-L-lysine + NADP(+) + H2O. It functions in the pathway siderophore biosynthesis; mycobactin biosynthesis. Flavoprotein monooxygenase required for N-hydroxylation of the two acylated lysine residues during mycobactin assembly, thus producing the hydroxamate groups necessary for iron sequestration. Is also able, but less efficiently, to hydroxylate L-lysine (non acylated) in vitro. This Mycobacterium bovis (strain ATCC BAA-935 / AF2122/97) protein is L-lysine N6-monooxygenase MbtG (mbtG).